Consider the following 387-residue polypeptide: Cytochrome b (387 aa).

The next 8 membrane-spanning stretches (helical) occupy residues 32-52 (FGFF…LLAM), 76-98 (WLLR…VHML), 113-133 (LWVS…LGYV), 179-199 (FFSL…LHII), 225-245 (FTIK…AFVF), 290-310 (LGVL…FLTI), 325-345 (LFWS…QPAA), and 353-373 (LYST…IYMV). Histidine 82 and histidine 96 together coordinate heme b. Heme b-binding residues include histidine 183 and histidine 197.

The protein belongs to the cytochrome b family. The main subunits of complex b-c1 are: cytochrome b, cytochrome c1 and the Rieske protein. Requires heme b as cofactor.

The protein localises to the mitochondrion inner membrane. In terms of biological role, component of the ubiquinol-cytochrome c reductase complex (complex III or cytochrome b-c1 complex) that is part of the mitochondrial respiratory chain. The b-c1 complex mediates electron transfer from ubiquinol to cytochrome c. Contributes to the generation of a proton gradient across the mitochondrial membrane that is then used for ATP synthesis. This chain is Cytochrome b (cytB), found in Dictyostelium citrinum (Slime mold).